Here is a 97-residue protein sequence, read N- to C-terminus: Defensin-like protein 246 (97 aa).

Positions 1-24 (MKFVAIFLVTCVLFSLFPSHLSQG) are cleaved as a signal peptide. Intrachain disulfides connect Cys39/Cys96, Cys50/Cys79, Cys58/Cys89, and Cys77/Cys91.

This sequence belongs to the DEFL family. In terms of tissue distribution, flower buds and stems.

The protein localises to the secreted. This is Defensin-like protein 246 (SCRL5) from Arabidopsis thaliana (Mouse-ear cress).